The primary structure comprises 120 residues: Large ribosomal subunit protein bL20 (120 aa).

Belongs to the bacterial ribosomal protein bL20 family.

Binds directly to 23S ribosomal RNA and is necessary for the in vitro assembly process of the 50S ribosomal subunit. It is not involved in the protein synthesizing functions of that subunit. The protein is Large ribosomal subunit protein bL20 of Cereibacter sphaeroides (strain ATCC 17025 / ATH 2.4.3) (Rhodobacter sphaeroides).